A 341-amino-acid polypeptide reads, in one-letter code: MATIYYDKDANLDLLKKRKVAIIGYGSQGHAHALNLRDSGVDVRVGLAAGSKSKAKAEGAGLRVLSVAEASKEADVIMVLIPDQTQKKVYDEEIAPHLSKGKALLFAHGFNIHFVQVRPPADVDVLLVAPKGPGHMVRRQYQDGRGIPGLVAVHQDATGQAKAVGLAYARGIGCTRAGVLETTFKEETETDLFGEQAVLCGGAAALVKNGFEVLVEAGYQPESAYFECLHELKLIVDLMYEGGLAWMRHSISDTAEYGDYTRGPRVVDGRSKDEMRKILKEIQGGHFAKEFILENQAGGPTMARYRAAEAAHPIEEVGKRLRDMMSWIREAKKDSSDPGSR.

The KARI N-terminal Rossmann domain maps to 1–182 (MATIYYDKDA…GCTRAGVLET (182 aa)). NADP(+) is bound by residues 25 to 28 (YGSQ), serine 51, serine 53, and 83 to 86 (DQTQ). Histidine 108 is a catalytic residue. Glycine 134 is an NADP(+) binding site. A KARI C-terminal knotted domain is found at 183 to 328 (TFKEETETDL…KRLRDMMSWI (146 aa)). 4 residues coordinate Mg(2+): aspartate 191, glutamate 195, glutamate 227, and glutamate 231. Substrate is bound at residue serine 252.

The protein belongs to the ketol-acid reductoisomerase family. Mg(2+) is required as a cofactor.

It catalyses the reaction (2R)-2,3-dihydroxy-3-methylbutanoate + NADP(+) = (2S)-2-acetolactate + NADPH + H(+). The enzyme catalyses (2R,3R)-2,3-dihydroxy-3-methylpentanoate + NADP(+) = (S)-2-ethyl-2-hydroxy-3-oxobutanoate + NADPH + H(+). Its pathway is amino-acid biosynthesis; L-isoleucine biosynthesis; L-isoleucine from 2-oxobutanoate: step 2/4. The protein operates within amino-acid biosynthesis; L-valine biosynthesis; L-valine from pyruvate: step 2/4. Its function is as follows. Involved in the biosynthesis of branched-chain amino acids (BCAA). Catalyzes an alkyl-migration followed by a ketol-acid reduction of (S)-2-acetolactate (S2AL) to yield (R)-2,3-dihydroxy-isovalerate. In the isomerase reaction, S2AL is rearranged via a Mg-dependent methyl migration to produce 3-hydroxy-3-methyl-2-ketobutyrate (HMKB). In the reductase reaction, this 2-ketoacid undergoes a metal-dependent reduction by NADPH to yield (R)-2,3-dihydroxy-isovalerate. This chain is Ketol-acid reductoisomerase (NADP(+)), found in Anaeromyxobacter sp. (strain K).